The sequence spans 122 residues: Small ribosomal subunit protein uS13 (122 aa).

Residues 98-122 (VRGQRTKTNARTRKGKRKTVGAKAK) are disordered.

This sequence belongs to the universal ribosomal protein uS13 family. As to quaternary structure, part of the 30S ribosomal subunit. Forms a loose heterodimer with protein S19. Forms two bridges to the 50S subunit in the 70S ribosome.

Functionally, located at the top of the head of the 30S subunit, it contacts several helices of the 16S rRNA. In the 70S ribosome it contacts the 23S rRNA (bridge B1a) and protein L5 of the 50S subunit (bridge B1b), connecting the 2 subunits; these bridges are implicated in subunit movement. Contacts the tRNAs in the A and P-sites. The sequence is that of Small ribosomal subunit protein uS13 from Nautilia profundicola (strain ATCC BAA-1463 / DSM 18972 / AmH).